A 505-amino-acid chain; its full sequence is Protein ERGIC-53-like (505 aa).

Positions 1–25 (MLEIRGLSPSLCLLSLLLVLHGAER) are cleaved as a signal peptide. The Lumenal segment spans residues 26-438 (SQPPPRRRFE…SGWLLGSSTC (413 aa)). Positions 32 to 254 (RRFEYKLSFK…DVLSFLTFSL (223 aa)) constitute an L-type lectin-like domain. A glycan (N-linked (GlcNAc...) asparagine) is linked at Asn-84. The cysteines at positions 177 and 216 are disulfide-linked. The helical transmembrane segment at 439–459 (LHTSIFLFFLLLQTVGFFCYV) threads the bilayer. The Cytoplasmic segment spans residues 460-505 (NFSRQELDKRLQEYLSTGSLSLEPALPITRTIGVLRRQPISPSMQA).

The protein resides in the endoplasmic reticulum-Golgi intermediate compartment membrane. This is Protein ERGIC-53-like (Lman1l) from Mus musculus (Mouse).